Here is a 602-residue protein sequence, read N- to C-terminus: Elongation factor 4 (602 aa).

The tr-type G domain maps to 2 to 184 (KHIRNFSIIA…AIVAKVPAPR (183 aa)). Residues 14–19 (DHGKST) and 131–134 (NKMD) contribute to the GTP site.

The protein belongs to the TRAFAC class translation factor GTPase superfamily. Classic translation factor GTPase family. LepA subfamily.

It is found in the cell inner membrane. The catalysed reaction is GTP + H2O = GDP + phosphate + H(+). Functionally, required for accurate and efficient protein synthesis under certain stress conditions. May act as a fidelity factor of the translation reaction, by catalyzing a one-codon backward translocation of tRNAs on improperly translocated ribosomes. Back-translocation proceeds from a post-translocation (POST) complex to a pre-translocation (PRE) complex, thus giving elongation factor G a second chance to translocate the tRNAs correctly. Binds to ribosomes in a GTP-dependent manner. The protein is Elongation factor 4 of Verminephrobacter eiseniae (strain EF01-2).